The following is a 236-amino-acid chain: MTRRYWNINLKEMIEAGVHFGHGIKKWNPKMAPYISAKRKGTHITNLARTARFLSEACDLVFDAASQGKSFLIVGTKKRAADLVASAAIRSRCHYVNKKWFSGMLTNWSITKTRLSQFRDLRAEEKMGKFHHLPKRDAAILKRKLSTLQRYLGGIKYMTRLPDIVIVLDQQKEYIALRECAILGIPTISLVDTNCDPDLANISIPANDDTMTSIRLILNKLVFAISEGRSLYIRNR.

It belongs to the universal ribosomal protein uS2 family.

The protein resides in the plastid. It is found in the chloroplast. In Saccharum hybrid (Sugarcane), this protein is Small ribosomal subunit protein uS2c (rps2).